A 211-amino-acid chain; its full sequence is Small ribosomal subunit protein uS5 (211 aa).

Residues 50 to 113 (LEDEVLDINM…DNAKINITRI (64 aa)) enclose the S5 DRBM domain.

The protein belongs to the universal ribosomal protein uS5 family. Part of the 30S ribosomal subunit. Contacts protein S4.

In terms of biological role, with S4 and S12 plays an important role in translational accuracy. This is Small ribosomal subunit protein uS5 from Methanococcoides burtonii (strain DSM 6242 / NBRC 107633 / OCM 468 / ACE-M).